Reading from the N-terminus, the 72-residue chain is Putative membrane protein insertion efficiency factor (72 aa).

This sequence belongs to the UPF0161 family.

Its subcellular location is the cell inner membrane. Could be involved in insertion of integral membrane proteins into the membrane. The polypeptide is Putative membrane protein insertion efficiency factor (Trichodesmium erythraeum (strain IMS101)).